Consider the following 497-residue polypeptide: Glycerol kinase (497 aa).

Thr12 serves as a coordination point for ADP. The ATP site is built by Thr12, Thr13, and Ser14. Thr12 contributes to the sn-glycerol 3-phosphate binding site. Arg16 provides a ligand contact to ADP. The sn-glycerol 3-phosphate site is built by Arg82, Glu83, Tyr134, and Asp243. Arg82, Glu83, Tyr134, Asp243, and Gln244 together coordinate glycerol. Thr265 and Gly308 together coordinate ADP. Residues Thr265, Gly308, Gln312, and Gly409 each coordinate ATP. Gly409 and Asn413 together coordinate ADP.

This sequence belongs to the FGGY kinase family.

The enzyme catalyses glycerol + ATP = sn-glycerol 3-phosphate + ADP + H(+). It participates in polyol metabolism; glycerol degradation via glycerol kinase pathway; sn-glycerol 3-phosphate from glycerol: step 1/1. With respect to regulation, inhibited by fructose 1,6-bisphosphate (FBP). Key enzyme in the regulation of glycerol uptake and metabolism. Catalyzes the phosphorylation of glycerol to yield sn-glycerol 3-phosphate. The protein is Glycerol kinase of Oleidesulfovibrio alaskensis (strain ATCC BAA-1058 / DSM 17464 / G20) (Desulfovibrio alaskensis).